The following is a 495-amino-acid chain: Steroid 21-hydroxylase (495 aa).

2 residues coordinate heme b: Arg-92 and Lys-121. Residue Arg-234 coordinates 17alpha-hydroxyprogesterone. Arg-234 contributes to the progesterone binding site. Residues His-366, Arg-427, and Cys-429 each contribute to the heme b site.

It belongs to the cytochrome P450 family. It depends on heme b as a cofactor.

The protein resides in the endoplasmic reticulum membrane. The protein localises to the microsome membrane. The enzyme catalyses progesterone + reduced [NADPH--hemoprotein reductase] + O2 = 21-hydroxyprogesterone + oxidized [NADPH--hemoprotein reductase] + H2O + H(+). It carries out the reaction 17alpha-hydroxyprogesterone + reduced [NADPH--hemoprotein reductase] + O2 = 11-deoxycortisol + oxidized [NADPH--hemoprotein reductase] + H2O + H(+). Functionally, a cytochrome P450 monooxygenase that plays a major role in adrenal steroidogenesis. Catalyzes the hydroxylation at C-21 of progesterone and 17alpha-hydroxyprogesterone to respectively form 11-deoxycorticosterone and 11-deoxycortisol, intermediate metabolites in the biosynthetic pathway of mineralocorticoids and glucocorticoids. Mechanistically, uses molecular oxygen inserting one oxygen atom into a substrate, and reducing the second into a water molecule, with two electrons provided by NADPH via cytochrome P450 reductase (CPR; NADPH-ferrihemoprotein reductase). The sequence is that of Steroid 21-hydroxylase (CYP21A2) from Homo sapiens (Human).